We begin with the raw amino-acid sequence, 585 residues long: Archaeosine synthase (585 aa).

The PUA domain maps to 516 to 584; sequence TKTVEIDGFV…IGVEIRHVEE (69 aa).

Belongs to the archaeosine synthase type 1 family. In terms of assembly, homodimer.

It carries out the reaction 7-cyano-7-carbaguanosine(15) in tRNA + L-glutamine + H2O = archaeosine(15) in tRNA + L-glutamate. It participates in tRNA modification; archaeosine-tRNA biosynthesis. In terms of biological role, is responsible for the final step in the biosynthesis of archaeosine, a modified nucleoside present in the dihydrouridine loop (D-loop) of archaeal tRNA. Catalyzes the conversion of 7-cyano-7-deazaguanine (preQ0)-modified tRNA to archaeosine-tRNA, transforming a nitrile group to a formamidine group. The protein is Archaeosine synthase of Haloferax volcanii (strain ATCC 29605 / DSM 3757 / JCM 8879 / NBRC 14742 / NCIMB 2012 / VKM B-1768 / DS2) (Halobacterium volcanii).